Consider the following 305-residue polypeptide: tRNA pseudouridine synthase B (305 aa).

The active-site Nucleophile is aspartate 48.

This sequence belongs to the pseudouridine synthase TruB family. Type 1 subfamily.

The enzyme catalyses uridine(55) in tRNA = pseudouridine(55) in tRNA. Functionally, responsible for synthesis of pseudouridine from uracil-55 in the psi GC loop of transfer RNAs. The chain is tRNA pseudouridine synthase B from Pseudomonas putida (strain ATCC 700007 / DSM 6899 / JCM 31910 / BCRC 17059 / LMG 24140 / F1).